We begin with the raw amino-acid sequence, 256 residues long: Major prion protein (256 aa).

The first 24 residues, 1–24, serve as a signal peptide directing secretion; that stretch reads MVKSHIGSWILVLFVAMWSDVGLC. Residues 25 to 233 form an interaction with GRB2, ERI3 and SYN1 region; the sequence is KKRPKPGGGW…ESEAYYQRGA (209 aa). The tract at residues 28–110 is disordered; sequence PKPGGGWNTG…QWNKPSKPKT (83 aa). A run of 5 repeats spans residues 54-62, 63-70, 71-78, 79-86, and 87-95. The segment at 54–95 is 5 X 8 AA tandem repeats of P-H-G-G-G-W-G-Q; it reads PQGGGGWGQPHGGGWGQPHGGGWGQPHGGGWGQPHGGGGWGQ. Residues 55–97 show a composition bias toward gly residues; sequence QGGGGWGQPHGGGWGQPHGGGWGQPHGGGWGQPHGGGGWGQGG. 12 residues coordinate Cu(2+): H64, G65, G66, H72, G73, G74, H80, G81, G82, H88, G90, and G91. An intrachain disulfide couples C182 to C217. 2 N-linked (GlcNAc...) asparagine glycosylation sites follow: N184 and N200. A233 is lipidated: GPI-anchor amidated alanine. Positions 234 to 256 are cleaved as a propeptide — removed in mature form; that stretch reads SVILFSSPPVILLISFLIFLIVG.

This sequence belongs to the prion family. Monomer and homodimer. Has a tendency to aggregate into amyloid fibrils containing a cross-beta spine, formed by a steric zipper of superposed beta-strands. Soluble oligomers may represent an intermediate stage on the path to fibril formation. Copper binding may promote oligomerization. Interacts with GRB2, APP, ERI3/PRNPIP and SYN1. Mislocalized cytosolically exposed PrP interacts with MGRN1; this interaction alters MGRN1 subcellular location and causes lysosomal enlargement. Interacts with KIAA1191.

The protein resides in the cell membrane. The protein localises to the golgi apparatus. Its primary physiological function is unclear. Has cytoprotective activity against internal or environmental stresses. May play a role in neuronal development and synaptic plasticity. May be required for neuronal myelin sheath maintenance. May play a role in iron uptake and iron homeostasis. Soluble oligomers are toxic to cultured neuroblastoma cells and induce apoptosis (in vitro). Association with GPC1 (via its heparan sulfate chains) targets PRNP to lipid rafts. Also provides Cu(2+) or Zn(2+) for the ascorbate-mediated GPC1 deaminase degradation of its heparan sulfate side chains. The sequence is that of Major prion protein (PRNP) from Cervus elaphus (Red deer).